The sequence spans 86 residues: Kappa-theraphotoxin-Cg1c (86 aa).

A signal peptide spans 1–21; the sequence is MKVSVLITLAVLGVMFVWASA. Residues 22 to 50 constitute a propeptide that is removed on maturation; that stretch reads AELEERGSDHRDSPAWLKSMERIFQSEER. Disulfide bonds link C52–C66, C59–C71, and C65–C78.

This sequence belongs to the neurotoxin 10 (Hwtx-1) family. 28 (Jztx-11) subfamily. In terms of tissue distribution, expressed by the venom gland.

The protein resides in the secreted. Its function is as follows. Probable ion channel inhibitor. The chain is Kappa-theraphotoxin-Cg1c from Chilobrachys guangxiensis (Chinese earth tiger tarantula).